An 84-amino-acid polypeptide reads, in one-letter code: Small ribosomal subunit protein uS17 (84 aa).

Belongs to the universal ribosomal protein uS17 family. In terms of assembly, part of the 30S ribosomal subunit.

One of the primary rRNA binding proteins, it binds specifically to the 5'-end of 16S ribosomal RNA. The protein is Small ribosomal subunit protein uS17 of Klebsiella pneumoniae subsp. pneumoniae (strain ATCC 700721 / MGH 78578).